The chain runs to 90 residues: Small ribosomal subunit protein bS20 (90 aa).

Basic residues predominate over residues 1-15; that stretch reads MANHKSAQKRIRQTK. Residues 1–22 are disordered; sequence MANHKSAQKRIRQTKTRTERNR.

The protein belongs to the bacterial ribosomal protein bS20 family.

Binds directly to 16S ribosomal RNA. This is Small ribosomal subunit protein bS20 from Helicobacter hepaticus (strain ATCC 51449 / 3B1).